Reading from the N-terminus, the 274-residue chain is Kit ligand (274 aa).

Positions 1-25 are cleaved as a signal peptide; sequence MKKTQTWIVTCIYLQLLLFNPLVKT. Residues 26–215 lie on the Extracellular side of the membrane; that stretch reads KGLCRNRVTD…TNPIEDSSIQ (190 aa). 2 disulfides stabilise this stretch: Cys-29/Cys-114 and Cys-68/Cys-164. N-linked (GlcNAc...) asparagine glycosylation is found at Asn-90, Asn-97, Asn-145, and Asn-196. Residues 216 to 238 form a helical membrane-spanning segment; the sequence is WAVMALPACFSLVIGFAFGAFYW. Topologically, residues 239–274 are cytoplasmic; that stretch reads KKKQPNLTRTVENIQINEEDNEISMLQEKEREFQEV.

This sequence belongs to the SCF family. In terms of assembly, homodimer, non-covalently linked. A soluble form is produced by proteolytic processing of isoform 1 in the extracellular domain.

Its subcellular location is the cell membrane. It localises to the secreted. The protein resides in the cytoplasm. It is found in the cytoskeleton. The protein localises to the cell projection. Its subcellular location is the lamellipodium. It localises to the filopodium. Its function is as follows. Stimulates the proliferation of mast cells. Able to augment the proliferation of both myeloid and lymphoid hematopoietic progenitors in bone marrow culture. Also mediates cell-cell adhesion. Acts synergistically with other cytokines, probably interleukins. The polypeptide is Kit ligand (KITLG) (Felis catus (Cat)).